The primary structure comprises 244 residues: MKKLMVVLSLIAAAWAEEQNKLVHGGPCDKTSHPYQAALYTSGHLLCGGVLIHPLWVLTAAHCKKPNLQVFLGKHNLRQRESSQEQSSVVRAVIHPDYDAASHDQDIMLLRLARPAKLSELIQPLPLERDCSANTTSCHILGWGKTADGDFPDTIQCAYIHLVSREECEHAYPGQITQNMLCAGDEKYGKDSCQGDSGGPLVCGDHLRGLVSWGNIPCGSKEKPGVYTNVCRYTNWIQKTIQAK.

An N-terminal signal peptide occupies residues 1 to 16 (MKKLMVVLSLIAAAWA). A propeptide spans 17 to 21 (EEQNK) (activation peptide). A Peptidase S1 domain is found at 22-242 (LVHGGPCDKT…YTNWIQKTIQ (221 aa)). 6 disulfide bridges follow: C28/C157, C47/C63, C131/C231, C138/C203, C168/C182, and C193/C218. Active-site charge relay system residues include H62 and D106. N134 carries an N-linked (GlcNAc...) asparagine glycan. The active-site Charge relay system is S197.

Post-translationally, inactivated by autolytic cleavage after Arg-80. In fluids, highest levels found in milk of lactating women followed by cerebrospinal fluid, nipple aspirate fluid and breast cyst fluid. Also found in serum, seminal plasma and some amniotic fluids and breast tumor cytosolic extracts. Not detected in urine. At the tissue level, highest concentrations found in glandular tissues such as salivary glands followed by lung, colon, fallopian tube, placenta, breast, pituitary and kidney. Not detected in skin, spleen, bone, thyroid, heart, ureter, liver, muscle, endometrium, testis, pancreas, seminal vesicle, ovary, adrenals and prostate. In brain, detected in gray matter neurons (at protein level). Colocalizes with pathological inclusions such as Lewy bodies and glial cytoplasmic inclusions. Overexpressed in primary breast tumors but not expressed in metastatic tumors.

It is found in the secreted. The protein localises to the nucleus. The protein resides in the nucleolus. It localises to the cytoplasm. Its subcellular location is the mitochondrion. It is found in the microsome. Inhibited by a range of serine protease inhibitors including soybean trypsin inhibitor, benzamidine and serpins. Activated by a range of glycosaminoglycans including chondroitin sulfate, dermatan sulfate, heparan sulfate and heparin. Serine protease which exhibits a preference for Arg over Lys in the substrate P1 position and for Ser or Pro in the P2 position. Shows activity against amyloid precursor protein, myelin basic protein, gelatin, casein and extracellular matrix proteins such as fibronectin, laminin, vitronectin and collagen. Degrades alpha-synuclein and prevents its polymerization, indicating that it may be involved in the pathogenesis of Parkinson disease and other synucleinopathies. May be involved in regulation of axon outgrowth following spinal cord injury. Tumor cells treated with a neutralizing KLK6 antibody migrate less than control cells, suggesting a role in invasion and metastasis. The sequence is that of Kallikrein-6 (KLK6) from Homo sapiens (Human).